Here is a 403-residue protein sequence, read N- to C-terminus: Pyruvate, phosphate dikinase regulatory protein 1, chloroplastic (403 aa).

A chloroplast-targeting transit peptide spans 1-86; that stretch reads MALLSAMKLQ…NTTGPMRPIE (86 aa). A disordered region spans residues 1–108; sequence MALLSAMKLQ…DVSSSSNGVS (108 aa). 3 stretches are compositionally biased toward low complexity: residues 17–26, 69–80, and 87–108; these read SSNLNPNSKP, STITNGSNNTTG, and SSSRTDVSTLDSDVSSSSNGVS. 269 to 276 lines the ADP pocket; the sequence is GVSRTGKT.

This sequence belongs to the pyruvate, phosphate/water dikinase regulatory protein family. PDRP subfamily. As to quaternary structure, interacts with PPDK1. In terms of tissue distribution, expressed in green tissues.

Its subcellular location is the plastid. It localises to the chloroplast stroma. The catalysed reaction is N(tele)-phospho-L-histidyl/L-threonyl-[pyruvate, phosphate dikinase] + ADP = N(tele)-phospho-L-histidyl/O-phospho-L-threonyl-[pyruvate, phosphate dikinase] + AMP + H(+). The enzyme catalyses N(tele)-phospho-L-histidyl/O-phospho-L-threonyl-[pyruvate, phosphate dikinase] + phosphate + H(+) = N(tele)-phospho-L-histidyl/L-threonyl-[pyruvate, phosphate dikinase] + diphosphate. Its activity is regulated as follows. Regulated by light/dark exposure. In terms of biological role, bifunctional serine/threonine kinase and phosphorylase involved in the dark/light-mediated regulation of PPDK by catalyzing its phosphorylation/dephosphorylation. Dark/light-induced changes in stromal concentrations of the competing ADP and Pi substrates govern the direction of the reaction. In the dark, phosphorylates the catalytic intermediate of PPDK (PPDK-HisP), inactivating it. Light exposure induces the phosphorolysis reaction that reactivates PPDK. Unlike the kinase function which can utilize either Thr or Ser as target, the phosphorylase function has a strict substrate requirement for threonyl phosphate. In Arabidopsis thaliana (Mouse-ear cress), this protein is Pyruvate, phosphate dikinase regulatory protein 1, chloroplastic (RP1).